We begin with the raw amino-acid sequence, 301 residues long: NADH-cytochrome b5 reductase 3 (301 aa).

A lipid anchor (N-myristoyl glycine) is attached at glycine 2. The FAD-binding FR-type domain maps to 40–152; it reads DIKYSLRLID…RGPNGLLVYQ (113 aa). Lysine 42 is subject to N6-acetyllysine. Tyrosine 43 is modified (phosphotyrosine). Residues arginine 92, proline 93, tyrosine 94, valine 109, lysine 111, and phenylalanine 114 each coordinate FAD. Lysine 120 carries the N6-acetyllysine modification. Residues lysine 126, methionine 127, serine 128, and threonine 185 each coordinate FAD.

It belongs to the flavoprotein pyridine nucleotide cytochrome reductase family. As to quaternary structure, component of a complex composed of cytochrome b5, NADH-cytochrome b5 reductase (CYB5R3) and MTARC2. Interacts with MTLN; the interaction is required to maintain cellular lipid composition and leads to stimulation of mitochondrial respiratory complex I activity. It depends on FAD as a cofactor.

The protein localises to the endoplasmic reticulum membrane. The protein resides in the mitochondrion outer membrane. It carries out the reaction 2 Fe(III)-[cytochrome b5] + NADH = 2 Fe(II)-[cytochrome b5] + NAD(+) + H(+). Catalyzes the reduction of two molecules of cytochrome b5 using NADH as the electron donor. The polypeptide is NADH-cytochrome b5 reductase 3 (CYB5R3) (Macaca fascicularis (Crab-eating macaque)).